We begin with the raw amino-acid sequence, 278 residues long: NH(3)-dependent NAD(+) synthetase (278 aa).

39-46 (GVSGGVDS) provides a ligand contact to ATP. Aspartate 45 lines the Mg(2+) pocket. Arginine 121 provides a ligand contact to deamido-NAD(+). Threonine 141 lines the ATP pocket. Position 146 (glutamate 146) interacts with Mg(2+). Lysine 154 and aspartate 161 together coordinate deamido-NAD(+). Residues lysine 170 and serine 192 each coordinate ATP. 252 to 253 (HK) serves as a coordination point for deamido-NAD(+).

Belongs to the NAD synthetase family. Homodimer.

The enzyme catalyses deamido-NAD(+) + NH4(+) + ATP = AMP + diphosphate + NAD(+) + H(+). The protein operates within cofactor biosynthesis; NAD(+) biosynthesis; NAD(+) from deamido-NAD(+) (ammonia route): step 1/1. Functionally, catalyzes the ATP-dependent amidation of deamido-NAD to form NAD. Uses ammonia as a nitrogen source. The protein is NH(3)-dependent NAD(+) synthetase of Saccharolobus solfataricus (strain ATCC 35092 / DSM 1617 / JCM 11322 / P2) (Sulfolobus solfataricus).